Reading from the N-terminus, the 544-residue chain is Tyrosine-protein kinase fynb (544 aa).

A lipid anchor (N-myristoyl glycine) is attached at Gly2. 2 S-palmitoyl cysteine lipidation sites follow: Cys3 and Cys6. Residues 89 to 150 form the SH3 domain; that stretch reads TGVTLFVALY…PSNYVAPVDS (62 aa). Residues 156–253 enclose the SH2 domain; it reads WYFGKLGRKD…GLCCRLVVPC (98 aa). In terms of domain architecture, Protein kinase spans 278–531; that stretch reads LQLIKRLGNG…YLQAFLEDYF (254 aa). Residues 284–292 and Lys306 each bind ATP; that span reads LGNGQFGEV. Asp397 (proton acceptor) is an active-site residue. Phosphotyrosine; by autocatalysis is present on Tyr427. At Tyr538 the chain carries Phosphotyrosine.

Belongs to the protein kinase superfamily. Tyr protein kinase family. SRC subfamily. It depends on Mn(2+) as a cofactor.

The protein localises to the cytoplasm. It catalyses the reaction L-tyrosyl-[protein] + ATP = O-phospho-L-tyrosyl-[protein] + ADP + H(+). Its activity is regulated as follows. Inhibited by phosphorylation of Tyr-538 by leukocyte common antigen and activated by dephosphorylation of this site. Functionally, tyrosine-protein kinase implicated in the control of cell growth. Plays a role in the regulation of intracellular calcium levels. Required in brain development and mature brain function with important roles in the regulation of axon growth, axon guidance, and neurite extension. Role in CNTN1-mediated signaling. The protein is Tyrosine-protein kinase fynb (fynb) of Danio rerio (Zebrafish).